We begin with the raw amino-acid sequence, 341 residues long: Eukaryotic translation initiation factor 3 subunit I (341 aa).

WD repeat units follow at residues 8 to 49, 50 to 91, 135 to 184, 189 to 228, and 286 to 325; these read GHER…GTYR, GHQG…KTWD, QSDE…LLYN, ELNQ…VLKS, and GHFG…YDFL.

This sequence belongs to the eIF-3 subunit I family. In terms of assembly, component of the eukaryotic translation initiation factor 3 (eIF-3) complex.

The protein resides in the cytoplasm. Its function is as follows. Component of the eukaryotic translation initiation factor 3 (eIF-3) complex, which is involved in protein synthesis of a specialized repertoire of mRNAs and, together with other initiation factors, stimulates binding of mRNA and methionyl-tRNAi to the 40S ribosome. The eIF-3 complex specifically targets and initiates translation of a subset of mRNAs involved in cell proliferation. The chain is Eukaryotic translation initiation factor 3 subunit I from Chaetomium globosum (strain ATCC 6205 / CBS 148.51 / DSM 1962 / NBRC 6347 / NRRL 1970) (Soil fungus).